Reading from the N-terminus, the 129-residue chain is HTH-type transcriptional regulator GlnR (129 aa).

The HTH merR-type domain maps to 10–78 (LFPIGIVMDL…MAGIKQVLLM (69 aa)). Positions 13–32 (IGIVMDLTQLSARQIRYYEE) form a DNA-binding region, H-T-H motif.

In terms of assembly, homodimer under conditions of nitrogen excess. Monomer under conditions of nitrogen-limited. Interacts with feedback-inhibited GlnA in order to stabilizes GlnR-DNA complex.

Its activity is regulated as follows. Under conditions of nitrogen excess, the DNA binding activity of GlnR is activated by a transient interaction with feedback-inhibited GlnA. Under conditions of nitrogen-limited, GlnR is autoinhibited by its C-terminal region. Transcription repressor during nitrogen excess. On the contrary of the MerR members, which require longer DNA sites for high-affinity binding, GlnR requires a DNA sequence of 17 nucleotides as minimal binding site. This is HTH-type transcriptional regulator GlnR from Bacillus anthracis.